The primary structure comprises 71 residues: UPF0435 protein SE_1565 (71 aa).

This sequence belongs to the UPF0435 family.

This chain is UPF0435 protein SE_1565, found in Staphylococcus epidermidis (strain ATCC 12228 / FDA PCI 1200).